The primary structure comprises 62 residues: Large ribosomal subunit protein bL28 (62 aa).

It belongs to the bacterial ribosomal protein bL28 family.

In Streptococcus equi subsp. equi (strain 4047), this protein is Large ribosomal subunit protein bL28.